The sequence spans 143 residues: D-aminoacyl-tRNA deacylase (143 aa).

A Gly-cisPro motif, important for rejection of L-amino acids motif is present at residues Gly-135–Pro-136.

The protein belongs to the DTD family. Homodimer.

The protein localises to the cytoplasm. It carries out the reaction glycyl-tRNA(Ala) + H2O = tRNA(Ala) + glycine + H(+). The catalysed reaction is a D-aminoacyl-tRNA + H2O = a tRNA + a D-alpha-amino acid + H(+). In terms of biological role, an aminoacyl-tRNA editing enzyme that deacylates mischarged D-aminoacyl-tRNAs. Also deacylates mischarged glycyl-tRNA(Ala), protecting cells against glycine mischarging by AlaRS. Acts via tRNA-based rather than protein-based catalysis; rejects L-amino acids rather than detecting D-amino acids in the active site. By recycling D-aminoacyl-tRNA to D-amino acids and free tRNA molecules, this enzyme counteracts the toxicity associated with the formation of D-aminoacyl-tRNA entities in vivo and helps enforce protein L-homochirality. The sequence is that of D-aminoacyl-tRNA deacylase from Mycolicibacterium smegmatis (strain ATCC 700084 / mc(2)155) (Mycobacterium smegmatis).